A 365-amino-acid chain; its full sequence is MDNYEFSELLKTLKNKVGNIASIIKPKNIQTRLKEIEELENSPSFWNDVKQAGIIGKEKTKITNLLKNYENAFNALNDASELFDLANSENDIETLQALFNDAPKLEDTITSLEISMLLSGENDGKNAIVSIHPGAGGTESNDWASILYRMYLRFCEREGFKVETLDFQEGEEAGLKDVSFLVKGENAYGYLKAENGIHRLVRTSPFDSAGRRHTSFSSVMVSPELDDDIEIEIEEKDIRIDYYRASGAGGQHVNKTESAVRITHFPTGIVVQCQNDRSQHKNKATAFKMLKSRLYELELMKQQDSANSSEKSEIGWGHQIRSYVLFPYQQVKDNRSGEAFSQVDNILDGDIKKMIEGVLIALKAE.

Position 251 is an N5-methylglutamine (Q251).

Belongs to the prokaryotic/mitochondrial release factor family. Methylated by PrmC. Methylation increases the termination efficiency of RF2.

It localises to the cytoplasm. In terms of biological role, peptide chain release factor 2 directs the termination of translation in response to the peptide chain termination codons UGA and UAA. The polypeptide is Peptide chain release factor 2 (Campylobacter jejuni subsp. doylei (strain ATCC BAA-1458 / RM4099 / 269.97)).